The sequence spans 140 residues: MAKVNTYETLFILDSNHYARDPGGVAKQLEELIAENGGEVQVSRMWMEQKLAYPIDKHQKGTYYLIYFSMEGPNLTQLARAFALAEPVIRELTIKLDPRLVEPILANARGEHFTGPAGAEGSDDESTESTDEAVAETADA.

The tract at residues 111–140 (EHFTGPAGAEGSDDESTESTDEAVAETADA) is disordered. Acidic residues predominate over residues 121 to 140 (GSDDESTESTDEAVAETADA).

This sequence belongs to the bacterial ribosomal protein bS6 family.

Binds together with bS18 to 16S ribosomal RNA. The protein is Small ribosomal subunit protein bS6 of Rhodopirellula baltica (strain DSM 10527 / NCIMB 13988 / SH1).